An 80-amino-acid polypeptide reads, in one-letter code: UPF0154 protein MGAS10270_Spy0296 (80 aa).

The helical transmembrane segment at A4–I24 threads the bilayer.

Belongs to the UPF0154 family.

It localises to the cell membrane. The protein is UPF0154 protein MGAS10270_Spy0296 of Streptococcus pyogenes serotype M2 (strain MGAS10270).